Consider the following 295-residue polypeptide: uncharacterized protein (295 aa).

The N-terminal stretch at 1-19 (MFKKYIFILILFIASIARA) is a signal peptide. The tract at residues 275–295 (RNNPPLKNNNAKGKNPYDTNK) is disordered. The span at 276–295 (NNPPLKNNNAKGKNPYDTNK) shows a compositional bias: low complexity.

This is an uncharacterized protein from Rickettsia conorii (strain ATCC VR-613 / Malish 7).